The following is a 213-amino-acid chain: Negative modulator of initiation of replication (213 aa).

Interaction with DNA stretches follow at residues 116–117 (AV), 145–149 (RTRVY), and 179–185 (NTNSGRK).

Belongs to the SeqA family. In terms of assembly, homodimer. Polymerizes to form helical filaments.

It localises to the cytoplasm. Its function is as follows. Negative regulator of replication initiation, which contributes to regulation of DNA replication and ensures that replication initiation occurs exactly once per chromosome per cell cycle. Binds to pairs of hemimethylated GATC sequences in the oriC region, thus preventing assembly of replication proteins and re-initiation at newly replicated origins. Repression is relieved when the region becomes fully methylated. In Haemophilus parainfluenzae (strain T3T1), this protein is Negative modulator of initiation of replication.